The primary structure comprises 95 residues: Histone-like DNA-binding protein (95 aa).

Belongs to the bacterial histone-like protein family.

This chain is Histone-like DNA-binding protein, found in Rickettsia montanensis.